Consider the following 128-residue polypeptide: Small ribosomal subunit protein eS8 (128 aa).

It belongs to the eukaryotic ribosomal protein eS8 family. In terms of assembly, part of the 30S ribosomal subunit.

This chain is Small ribosomal subunit protein eS8, found in Methanococcus maripaludis (strain C6 / ATCC BAA-1332).